Reading from the N-terminus, the 523-residue chain is Galactarate dehydratase (L-threo-forming) (523 aa).

This sequence belongs to the UxaA family. Homodimer. Fe(2+) is required as a cofactor.

The enzyme catalyses galactarate = 5-dehydro-4-deoxy-D-glucarate + H2O. It participates in carbohydrate acid metabolism; galactarate degradation; D-glycerate from galactarate: step 1/3. In terms of biological role, catalyzes the dehydration of galactarate to form 5-dehydro-4-deoxy-D-glucarate (5-KDG). The chain is Galactarate dehydratase (L-threo-forming) from Escherichia coli (strain K12).